A 242-amino-acid chain; its full sequence is Uridylate kinase (242 aa).

Position 16–19 (16–19 (KISG)) interacts with ATP. The involved in allosteric activation by GTP stretch occupies residues 24–29 (GDQGFG). Position 58 (Gly58) interacts with UMP. Residues Gly59 and Arg63 each coordinate ATP. UMP contacts are provided by residues Asp78 and 139 to 146 (TGNPYFTT). Thr166, Tyr172, and Asp175 together coordinate ATP.

The protein belongs to the UMP kinase family. As to quaternary structure, homohexamer.

Its subcellular location is the cytoplasm. The catalysed reaction is UMP + ATP = UDP + ADP. Its pathway is pyrimidine metabolism; CTP biosynthesis via de novo pathway; UDP from UMP (UMPK route): step 1/1. With respect to regulation, allosterically activated by GTP. Inhibited by UTP. Its function is as follows. Catalyzes the reversible phosphorylation of UMP to UDP. The chain is Uridylate kinase from Roseobacter denitrificans (strain ATCC 33942 / OCh 114) (Erythrobacter sp. (strain OCh 114)).